A 576-amino-acid chain; its full sequence is Probable lysosomal cobalamin transporter (576 aa).

A run of 10 helical transmembrane segments spans residues 8 to 28 (LIWAVYAIVVAVLVMVASVFI), 40 to 60 (VVTFTCIVAITSLLATVLLLP), 98 to 118 (YLLYSLDAFLCLLAIPFVYFW), 145 to 165 (TISFIAIVVVLFIVGFLVPVA), 188 to 208 (VLTFTLGLLITMGLFLYILYT), 312 to 332 (LLGGIAILLITLMIWISMLLT), 347 to 367 (GYILSGIGVFNPINWIFVQSA), 377 to 397 (LTVVVLLLFGSSVVGISTIGI), 419 to 439 (LTTAMLMLTILALDYSIPMLV), and 503 to 523 (FFGTVFFWSQFIFLVIYLLVL). The interval 549–576 (RLLTSSARGVGDTYQSVGGRNNFSTRAG) is disordered. Over residues 561–576 (TYQSVGGRNNFSTRAG) the composition is skewed to polar residues. N-linked (GlcNAc...) asparagine glycosylation occurs at Asn-570.

It belongs to the LIMR family. LMBRD1 subfamily.

It is found in the lysosome membrane. Probable lysosomal cobalamin transporter. Required to export cobalamin from lysosomes allowing its conversion to cofactors. The chain is Probable lysosomal cobalamin transporter from Aspergillus niger (strain ATCC MYA-4892 / CBS 513.88 / FGSC A1513).